Consider the following 348-residue polypeptide: tRNA N6-adenosine threonylcarbamoyltransferase (348 aa).

The Fe cation site is built by His114 and His118. Substrate contacts are provided by residues 137–141 (LVSGG), Asp171, Gly184, Asp188, and Asn283. Position 311 (Asp311) interacts with Fe cation.

This sequence belongs to the KAE1 / TsaD family. It depends on Fe(2+) as a cofactor.

The protein localises to the cytoplasm. The enzyme catalyses L-threonylcarbamoyladenylate + adenosine(37) in tRNA = N(6)-L-threonylcarbamoyladenosine(37) in tRNA + AMP + H(+). Required for the formation of a threonylcarbamoyl group on adenosine at position 37 (t(6)A37) in tRNAs that read codons beginning with adenine. Is involved in the transfer of the threonylcarbamoyl moiety of threonylcarbamoyl-AMP (TC-AMP) to the N6 group of A37, together with TsaE and TsaB. TsaD likely plays a direct catalytic role in this reaction. The polypeptide is tRNA N6-adenosine threonylcarbamoyltransferase (Nocardioides sp. (strain ATCC BAA-499 / JS614)).